The primary structure comprises 344 residues: 3-dehydroquinate synthase (344 aa).

Residues 60–65 (DGEEYK), 94–98 (GVISD), 118–119 (TT), lysine 131, lysine 140, and 158–161 (FLNT) each bind NAD(+). Zn(2+) contacts are provided by glutamate 173, histidine 232, and histidine 249.

It belongs to the sugar phosphate cyclases superfamily. Dehydroquinate synthase family. It depends on Co(2+) as a cofactor. Requires Zn(2+) as cofactor. The cofactor is NAD(+).

It localises to the cytoplasm. It catalyses the reaction 7-phospho-2-dehydro-3-deoxy-D-arabino-heptonate = 3-dehydroquinate + phosphate. It functions in the pathway metabolic intermediate biosynthesis; chorismate biosynthesis; chorismate from D-erythrose 4-phosphate and phosphoenolpyruvate: step 2/7. Catalyzes the conversion of 3-deoxy-D-arabino-heptulosonate 7-phosphate (DAHP) to dehydroquinate (DHQ). This chain is 3-dehydroquinate synthase, found in Campylobacter hominis (strain ATCC BAA-381 / DSM 21671 / CCUG 45161 / LMG 19568 / NCTC 13146 / CH001A).